The sequence spans 500 residues: Glucosylglycerol-phosphate synthase (500 aa).

Belongs to the glycosyltransferase 20 family.

The catalysed reaction is ADP-alpha-D-glucose + sn-glycerol 3-phosphate = 2-O-(alpha-D-glucopyranosyl)-sn-glycerol 3-phosphate + ADP + H(+). It participates in glycan metabolism; glucosylglycerol biosynthesis. In terms of biological role, involved in salt tolerance by producing GG-phosphate from ADP-glucose and glycerol-3-phosphate (G3P), an intermediate in the synthesis of the osmolyte glucosylglycerol (GG). The chain is Glucosylglycerol-phosphate synthase (ggpS) from Picosynechococcus sp. (strain ATCC 27264 / PCC 7002 / PR-6) (Agmenellum quadruplicatum).